A 180-amino-acid chain; its full sequence is Adenine phosphoribosyltransferase (180 aa).

The protein belongs to the purine/pyrimidine phosphoribosyltransferase family. Homodimer.

The protein resides in the cytoplasm. It catalyses the reaction AMP + diphosphate = 5-phospho-alpha-D-ribose 1-diphosphate + adenine. It participates in purine metabolism; AMP biosynthesis via salvage pathway; AMP from adenine: step 1/1. In terms of biological role, catalyzes a salvage reaction resulting in the formation of AMP, that is energically less costly than de novo synthesis. The polypeptide is Adenine phosphoribosyltransferase (Mycolicibacterium paratuberculosis (strain ATCC BAA-968 / K-10) (Mycobacterium paratuberculosis)).